A 275-amino-acid chain; its full sequence is Putative phosphoenolpyruvate synthase regulatory protein (275 aa).

An ADP-binding site is contributed by 157 to 164; it reads GVSRCGKT.

Belongs to the pyruvate, phosphate/water dikinase regulatory protein family. PSRP subfamily.

The enzyme catalyses [pyruvate, water dikinase] + ADP = [pyruvate, water dikinase]-phosphate + AMP + H(+). It carries out the reaction [pyruvate, water dikinase]-phosphate + phosphate + H(+) = [pyruvate, water dikinase] + diphosphate. Functionally, bifunctional serine/threonine kinase and phosphorylase involved in the regulation of the phosphoenolpyruvate synthase (PEPS) by catalyzing its phosphorylation/dephosphorylation. The sequence is that of Putative phosphoenolpyruvate synthase regulatory protein from Bordetella bronchiseptica (strain ATCC BAA-588 / NCTC 13252 / RB50) (Alcaligenes bronchisepticus).